Consider the following 196-residue polypeptide: 3-dehydroquinate dehydratase (196 aa).

3-dehydroquinate-binding positions include 23–25 (ELR) and arginine 45. Catalysis depends on histidine 98, which acts as the Proton donor/acceptor. Residue lysine 122 is the Schiff-base intermediate with substrate of the active site. 2 residues coordinate 3-dehydroquinate: arginine 159 and glutamine 182.

It belongs to the type-I 3-dehydroquinase family. Homodimer.

It catalyses the reaction 3-dehydroquinate = 3-dehydroshikimate + H2O. It participates in metabolic intermediate biosynthesis; chorismate biosynthesis; chorismate from D-erythrose 4-phosphate and phosphoenolpyruvate: step 3/7. In terms of biological role, involved in the third step of the chorismate pathway, which leads to the biosynthesis of aromatic amino acids. Catalyzes the cis-dehydration of 3-dehydroquinate (DHQ) and introduces the first double bond of the aromatic ring to yield 3-dehydroshikimate. In Archaeoglobus fulgidus (strain ATCC 49558 / DSM 4304 / JCM 9628 / NBRC 100126 / VC-16), this protein is 3-dehydroquinate dehydratase.